The chain runs to 85 residues: MDTSELERRAKICLSVVTFSTSYSLDAGVVVLAFLGIQRFRRSSKGAKIPEFLWVTWQSFIKVLSLLNGFVQHQKRYIFIRVCIY.

The next 2 membrane-spanning stretches (helical) occupy residues isoleucine 12 to phenylalanine 34 and isoleucine 49 to valine 71.

It localises to the cell membrane. This is an uncharacterized protein from Archaeoglobus fulgidus (strain ATCC 49558 / DSM 4304 / JCM 9628 / NBRC 100126 / VC-16).